Reading from the N-terminus, the 350-residue chain is UDP-3-O-acylglucosamine N-acyltransferase (350 aa).

The active-site Proton acceptor is His-244.

The protein belongs to the transferase hexapeptide repeat family. LpxD subfamily. In terms of assembly, homotrimer.

The catalysed reaction is a UDP-3-O-[(3R)-3-hydroxyacyl]-alpha-D-glucosamine + a (3R)-hydroxyacyl-[ACP] = a UDP-2-N,3-O-bis[(3R)-3-hydroxyacyl]-alpha-D-glucosamine + holo-[ACP] + H(+). Its pathway is bacterial outer membrane biogenesis; LPS lipid A biosynthesis. Functionally, catalyzes the N-acylation of UDP-3-O-acylglucosamine using 3-hydroxyacyl-ACP as the acyl donor. Is involved in the biosynthesis of lipid A, a phosphorylated glycolipid that anchors the lipopolysaccharide to the outer membrane of the cell. This chain is UDP-3-O-acylglucosamine N-acyltransferase, found in Janthinobacterium sp. (strain Marseille) (Minibacterium massiliensis).